Reading from the N-terminus, the 421-residue chain is GTPase Obg (421 aa).

One can recognise an Obg domain in the interval 4-161 (LHFIDEAFNE…FKIKIQLKVL (158 aa)). The region spanning 162-327 (ADVGLLGFPS…LKYAIKNLLQ (166 aa)) is the OBG-type G domain. GTP-binding positions include 168–175 (GFPSVGKS), 193–197 (FTTLF), 214–217 (DLPG), 281–284 (NKMD), and 308–310 (SLI). Positions 175 and 195 each coordinate Mg(2+). Residues 343-421 (DLNSETQTFT…ICNYLFDFVI (79 aa)) enclose the OCT domain.

This sequence belongs to the TRAFAC class OBG-HflX-like GTPase superfamily. OBG GTPase family. In terms of assembly, monomer. Mg(2+) is required as a cofactor.

Its subcellular location is the cytoplasm. Functionally, an essential GTPase which binds GTP, GDP and possibly (p)ppGpp with moderate affinity, with high nucleotide exchange rates and a fairly low GTP hydrolysis rate. Plays a role in control of the cell cycle, stress response, ribosome biogenesis and in those bacteria that undergo differentiation, in morphogenesis control. In Phytoplasma australiense, this protein is GTPase Obg.